We begin with the raw amino-acid sequence, 78 residues long: Acyl carrier protein (78 aa).

Positions alanine 4 to lysine 78 constitute a Carrier domain. Position 39 is an O-(pantetheine 4'-phosphoryl)serine (serine 39).

This sequence belongs to the acyl carrier protein (ACP) family. 4'-phosphopantetheine is transferred from CoA to a specific serine of apo-ACP by AcpS. This modification is essential for activity because fatty acids are bound in thioester linkage to the sulfhydryl of the prosthetic group.

The protein resides in the cytoplasm. It functions in the pathway lipid metabolism; fatty acid biosynthesis. Carrier of the growing fatty acid chain in fatty acid biosynthesis. The polypeptide is Acyl carrier protein (Chlorobium limicola (strain DSM 245 / NBRC 103803 / 6330)).